Consider the following 237-residue polypeptide: Ribonuclease PH (237 aa).

Phosphate contacts are provided by residues Arg-86 and 124 to 126 (GTR).

Belongs to the RNase PH family. Homohexameric ring arranged as a trimer of dimers.

The enzyme catalyses tRNA(n+1) + phosphate = tRNA(n) + a ribonucleoside 5'-diphosphate. Its function is as follows. Phosphorolytic 3'-5' exoribonuclease that plays an important role in tRNA 3'-end maturation. Removes nucleotide residues following the 3'-CCA terminus of tRNAs; can also add nucleotides to the ends of RNA molecules by using nucleoside diphosphates as substrates, but this may not be physiologically important. Probably plays a role in initiation of 16S rRNA degradation (leading to ribosome degradation) during starvation. The chain is Ribonuclease PH from Shewanella baltica (strain OS223).